The chain runs to 299 residues: Taste receptor type 2 member 42 (299 aa).

Topologically, residues 1 to 7 (MATELDK) are extracellular. A helical membrane pass occupies residues 8-28 (IFLILAIAEFIISMLGNVFIG). The Cytoplasmic segment spans residues 29 to 50 (LVNCSEGIKNQKVFSSDFILTS). A helical membrane pass occupies residues 51–71 (LAISTIGQLLVILFDSFLVGL). The Extracellular segment spans residues 72–101 (ASHLYTTYRLGKPVIMLWHMTNHLTTWLAT). The chain crosses the membrane as a helical span at residues 102–122 (CLSVFYFFKIAHFPHSLFLWL). Over 123–127 (RWRMN) the chain is Cytoplasmic. Residues 128-148 (GMIAMLLILSLFLLIFDSSVL) traverse the membrane as a helical segment. The Extracellular portion of the chain corresponds to 149 to 187 (EIFIDISLNIIDKSSLTLYLDESKTLYDKLSILKTLLSL). Residues 188-208 (TSFIPFSLSLTSVLFLYLSLV) traverse the membrane as a helical segment. The Cytoplasmic portion of the chain corresponds to 209–238 (RHTRNLKLSSLGSRDSSTEAHRRAMKMVMS). The helical transmembrane segment at 239–259 (FLFLFIVHFFSLQVANWIFFM) threads the bilayer. Over 260–265 (LWNNKY) the chain is Extracellular. A helical transmembrane segment spans residues 266–286 (IKFVMLALNAFPSCHSFILIL). Residues 287–299 (GNSKLRQTAVRLL) are Cytoplasmic-facing.

Belongs to the G-protein coupled receptor T2R family.

The protein localises to the membrane. Its function is as follows. Receptor that may play a role in the perception of bitterness and is gustducin-linked. May play a role in sensing the chemical composition of the gastrointestinal content. The activity of this receptor may stimulate alpha gustducin, mediate PLC-beta-2 activation and lead to the gating of TRPM5. The chain is Taste receptor type 2 member 42 (TAS2R42) from Gorilla gorilla gorilla (Western lowland gorilla).